A 566-amino-acid polypeptide reads, in one-letter code: Lamin-1 (566 aa).

The disordered stretch occupies residues 1-37; sequence MSSRKGTRSSRIVTLERSANSSLSNNGGGDDSFGSTL. Position 2 is an N-acetylserine (S2). Residues 13–47 form a head region; it reads VTLERSANSSLSNNGGGDDSFGSTLLETSRLQEKD. An IF rod domain is found at 45–387; it reads EKDHLTSLNS…ALLEGEEERL (343 aa). A coil 1A region spans residues 48–82; that stretch reads HLTSLNSRLATYIDKVRQLEQENNRLQVQIRDIEV. A linker 1 region spans residues 83 to 94; it reads VEKKEKSNLADR. Residues 95 to 228 are coil 1B; sequence FEAEKARLRR…AFALQQHKGE (134 aa). The linker 2 stretch occupies residues 229–256; sequence LEEVRHKRQVDMTTYAKQINDEYQSKLQ. The segment at 257 to 385 is coil 2; sequence DQIEEMRAQF…YQALLEGEEE (129 aa). A tail region spans residues 386–566; it reads RLNLTQEAPQ…SDPADRCSIM (181 aa). The LTD domain occupies 435–550; that stretch reads RRSKLNKETV…DTVSSITVEF (116 aa). A disordered region spans residues 528 to 566; the sequence is GDNPSARLEDSEGDTVSSITVEFSESSDPSDPADRCSIM. The span at 541–556 shows a compositional bias: polar residues; it reads DTVSSITVEFSESSDP. Position 563 is a cysteine methyl ester (C563). The S-farnesyl cysteine moiety is linked to residue C563. A propeptide spans 564–566 (removed in mature form); sequence SIM.

The protein belongs to the intermediate filament family. As to quaternary structure, interacts with LEM domain proteins lem-2 and emr-1. May interact with unc-84; this interaction may be required to complete the connection between the nuclear lamina and the cytoskeleton. Ubiquitous. Expressed in all cells, except in cells undergoing spermatogenesis.

It is found in the nucleus envelope. It localises to the nucleus inner membrane. In terms of biological role, major component of the nuclear lamina, a fibrous layer on the nucleoplasmic side of the inner nuclear membrane. Provides a framework for the nuclear envelope and probably also interacts with chromatin. Essential to maintain the shape and integrity of the nucleus, and for DNA replication. Involved in spatial organization of nuclear pore complexes. It is not a target for ced-3 during apoptosis, suggesting that lamin cleavage is not essential for apoptosis in C.elegans. This Caenorhabditis elegans protein is Lamin-1.